The sequence spans 129 residues: Glycine cleavage system H protein (129 aa).

The Lipoyl-binding domain maps to 24 to 106 (IAVIGITAYA…YGDGWLIKVR (83 aa)). An N6-lipoyllysine modification is found at lysine 65.

This sequence belongs to the GcvH family. As to quaternary structure, the glycine cleavage system is composed of four proteins: P, T, L and H. The cofactor is (R)-lipoate.

Its function is as follows. The glycine cleavage system catalyzes the degradation of glycine. The H protein shuttles the methylamine group of glycine from the P protein to the T protein. The sequence is that of Glycine cleavage system H protein from Synechococcus sp. (strain JA-3-3Ab) (Cyanobacteria bacterium Yellowstone A-Prime).